Consider the following 103-residue polypeptide: Large ribosomal subunit protein uL24 (103 aa).

It belongs to the universal ribosomal protein uL24 family. Part of the 50S ribosomal subunit.

Functionally, one of two assembly initiator proteins, it binds directly to the 5'-end of the 23S rRNA, where it nucleates assembly of the 50S subunit. Its function is as follows. One of the proteins that surrounds the polypeptide exit tunnel on the outside of the subunit. The protein is Large ribosomal subunit protein uL24 of Endomicrobium trichonymphae.